The chain runs to 374 residues: Putative F-box protein At3g16590 (374 aa).

The F-box domain maps to 1-45; the sequence is MPTKLPLELEDEILLRVPPLSLTRFRTVCKRWNTLFNDQRFINNH.

This is Putative F-box protein At3g16590 from Arabidopsis thaliana (Mouse-ear cress).